We begin with the raw amino-acid sequence, 272 residues long: uncharacterized protein (272 aa).

Positions 101-130 are disordered; it reads CPTGKKNKAPSSLIPKISKTSTSSLTKEDE. Residues 110 to 125 are compositionally biased toward low complexity; sequence PSSLIPKISKTSTSSL. The residue at position 142 (Ser-142) is a Phosphoserine.

This is an uncharacterized protein from Arabidopsis thaliana (Mouse-ear cress).